Consider the following 1279-residue polypeptide: Cellulose synthase operon protein C (1279 aa).

Residues 1–21 (MRRHTLAIAILAALASTASVA) form the signal peptide. 10 TPR repeats span residues 27-60 (QSLL…SPDQ), 62-94 (DALY…SPVP), 218-250 (ADET…HPDD), 306-339 (VDAL…PGGA), 384-417 (PGAA…HPGD), 460-493 (ALRA…DPEN), 495-527 (WTRF…QPNQ), 606-639 (PERV…NPNP), 719-752 (ALGV…NPNN), and 787-820 (PEIL…ENAM).

It participates in glycan metabolism; bacterial cellulose biosynthesis. Required for maximal bacterial cellulose synthesis. The protein is Cellulose synthase operon protein C (bscS) of Pseudomonas fluorescens (strain SBW25).